The sequence spans 256 residues: Ubiquinone/menaquinone biosynthesis C-methyltransferase UbiE (256 aa).

S-adenosyl-L-methionine contacts are provided by residues Thr-79, Asp-100, and 128–129 (DA).

It belongs to the class I-like SAM-binding methyltransferase superfamily. MenG/UbiE family.

The enzyme catalyses a 2-demethylmenaquinol + S-adenosyl-L-methionine = a menaquinol + S-adenosyl-L-homocysteine + H(+). It catalyses the reaction a 2-methoxy-6-(all-trans-polyprenyl)benzene-1,4-diol + S-adenosyl-L-methionine = a 5-methoxy-2-methyl-3-(all-trans-polyprenyl)benzene-1,4-diol + S-adenosyl-L-homocysteine + H(+). The protein operates within quinol/quinone metabolism; menaquinone biosynthesis; menaquinol from 1,4-dihydroxy-2-naphthoate: step 2/2. Its pathway is cofactor biosynthesis; ubiquinone biosynthesis. In terms of biological role, methyltransferase required for the conversion of demethylmenaquinol (DMKH2) to menaquinol (MKH2) and the conversion of 2-polyprenyl-6-methoxy-1,4-benzoquinol (DDMQH2) to 2-polyprenyl-3-methyl-6-methoxy-1,4-benzoquinol (DMQH2). The sequence is that of Ubiquinone/menaquinone biosynthesis C-methyltransferase UbiE from Ectopseudomonas mendocina (strain ymp) (Pseudomonas mendocina).